The chain runs to 124 residues: Small ribosomal subunit protein uS12 (124 aa).

D89 is subject to 3-methylthioaspartic acid.

Belongs to the universal ribosomal protein uS12 family. As to quaternary structure, part of the 30S ribosomal subunit. Contacts proteins S8 and S17. May interact with IF1 in the 30S initiation complex.

Functionally, with S4 and S5 plays an important role in translational accuracy. Interacts with and stabilizes bases of the 16S rRNA that are involved in tRNA selection in the A site and with the mRNA backbone. Located at the interface of the 30S and 50S subunits, it traverses the body of the 30S subunit contacting proteins on the other side and probably holding the rRNA structure together. The combined cluster of proteins S8, S12 and S17 appears to hold together the shoulder and platform of the 30S subunit. The protein is Small ribosomal subunit protein uS12 of Pasteurella multocida (strain Pm70).